Reading from the N-terminus, the 172-residue chain is Protein-export protein SecB (172 aa).

The disordered stretch occupies residues 152–172 (AQGAEGGNSGIVMPDGSQARH).

It belongs to the SecB family. As to quaternary structure, homotetramer, a dimer of dimers. One homotetramer interacts with 1 SecA dimer.

The protein localises to the cytoplasm. In terms of biological role, one of the proteins required for the normal export of preproteins out of the cell cytoplasm. It is a molecular chaperone that binds to a subset of precursor proteins, maintaining them in a translocation-competent state. It also specifically binds to its receptor SecA. In Cupriavidus taiwanensis (strain DSM 17343 / BCRC 17206 / CCUG 44338 / CIP 107171 / LMG 19424 / R1) (Ralstonia taiwanensis (strain LMG 19424)), this protein is Protein-export protein SecB.